We begin with the raw amino-acid sequence, 155 residues long: MNTYEGNLVANNIKIGIVVARFNEFITSKLLSGALDNLKRENVNEKDIEVAWVPGAFEIPLIASKMAKSKKYDAIICLGAVIRGNTSHYDYVCSEVSKGIAQISLNSEIPVMFGVLTTDTIEQAIERAGTKAGNKGSECAQGAIEMVNLIRTLDA.

Residues Phe-22, 56–58 (AFE), and 80–82 (AVI) contribute to the 5-amino-6-(D-ribitylamino)uracil site. 85 to 86 (NT) is a binding site for (2S)-2-hydroxy-3-oxobutyl phosphate. His-88 (proton donor) is an active-site residue. 5-amino-6-(D-ribitylamino)uracil is bound at residue Phe-113. A (2S)-2-hydroxy-3-oxobutyl phosphate-binding site is contributed by Arg-127.

The protein belongs to the DMRL synthase family.

The enzyme catalyses (2S)-2-hydroxy-3-oxobutyl phosphate + 5-amino-6-(D-ribitylamino)uracil = 6,7-dimethyl-8-(1-D-ribityl)lumazine + phosphate + 2 H2O + H(+). Its pathway is cofactor biosynthesis; riboflavin biosynthesis; riboflavin from 2-hydroxy-3-oxobutyl phosphate and 5-amino-6-(D-ribitylamino)uracil: step 1/2. Catalyzes the formation of 6,7-dimethyl-8-ribityllumazine by condensation of 5-amino-6-(D-ribitylamino)uracil with 3,4-dihydroxy-2-butanone 4-phosphate. This is the penultimate step in the biosynthesis of riboflavin. This Streptococcus pneumoniae serotype 2 (strain D39 / NCTC 7466) protein is 6,7-dimethyl-8-ribityllumazine synthase.